A 620-amino-acid polypeptide reads, in one-letter code: 1-deoxy-D-xylulose-5-phosphate synthase (620 aa).

Thiamine diphosphate-binding positions include histidine 75 and 116–118; that span reads AHS. Residue aspartate 147 coordinates Mg(2+). Thiamine diphosphate contacts are provided by residues 148 to 149, asparagine 177, tyrosine 284, and glutamate 366; that span reads GA. Asparagine 177 contributes to the Mg(2+) binding site.

It belongs to the transketolase family. DXPS subfamily. As to quaternary structure, homodimer. Mg(2+) is required as a cofactor. Requires thiamine diphosphate as cofactor.

The catalysed reaction is D-glyceraldehyde 3-phosphate + pyruvate + H(+) = 1-deoxy-D-xylulose 5-phosphate + CO2. The protein operates within metabolic intermediate biosynthesis; 1-deoxy-D-xylulose 5-phosphate biosynthesis; 1-deoxy-D-xylulose 5-phosphate from D-glyceraldehyde 3-phosphate and pyruvate: step 1/1. Catalyzes the acyloin condensation reaction between C atoms 2 and 3 of pyruvate and glyceraldehyde 3-phosphate to yield 1-deoxy-D-xylulose-5-phosphate (DXP). This chain is 1-deoxy-D-xylulose-5-phosphate synthase, found in Bordetella avium (strain 197N).